A 185-amino-acid polypeptide reads, in one-letter code: Probable gluconokinase (185 aa).

ATP is bound at residue 11-18; the sequence is GVSGSGKS.

This sequence belongs to the gluconokinase GntK/GntV family.

It carries out the reaction D-gluconate + ATP = 6-phospho-D-gluconate + ADP + H(+). Its pathway is carbohydrate acid metabolism; D-gluconate degradation. This is Probable gluconokinase (Idnk) from Rattus norvegicus (Rat).